The primary structure comprises 294 residues: Autophagy protein 5 (294 aa).

A Glycyl lysine isopeptide (Lys-Gly) (interchain with G-Cter in ATG12) cross-link involves residue Lys-149.

This sequence belongs to the ATG5 family. Conjugated with ATG12. The ATG5-ATG12 conjugate forms a complex with several units of ATG16. The ATG12-ATG5 conjugate also associates with ATG3. In terms of processing, conjugated to ATG12; which is essential for autophagy. Conjugation with ATG12 involves ATG7 as an E1-like activating enzyme and ATG10 as an E2-like conjugating enzyme.

It is found in the preautophagosomal structure membrane. In terms of biological role, involved in cytoplasm to vacuole transport (Cvt) and autophagic vesicle formation. Autophagy is essential for maintenance of amino acid levels and protein synthesis under nitrogen starvation. Required for selective autophagic degradation of the nucleus (nucleophagy). Also required for mitophagy, which eliminates defective or superfluous mitochondria in order to fulfill cellular energy requirements and prevent excess ROS production. Conjugation with ATG12, through a ubiquitin-like conjugating system involving ATG7 as an E1-like activating enzyme and ATG10 as an E2-like conjugating enzyme, is essential for its function. The ATG12-ATG5 conjugate acts as an E3-like enzyme which is required for lipidation of ATG8 and ATG8 association to the vesicle membranes. ATG12-ATG5 rearranges the ATG3 catalytic center and enhances its E2 activity. Plays a role in the regulation of filamentous growth and chronological longevity. The sequence is that of Autophagy protein 5 (ATG5) from Saccharomyces cerevisiae (strain YJM789) (Baker's yeast).